Reading from the N-terminus, the 299-residue chain is Methionyl-tRNA formyltransferase (299 aa).

109–112 (SLLP) lines the (6S)-5,6,7,8-tetrahydrofolate pocket.

It belongs to the Fmt family.

It carries out the reaction L-methionyl-tRNA(fMet) + (6R)-10-formyltetrahydrofolate = N-formyl-L-methionyl-tRNA(fMet) + (6S)-5,6,7,8-tetrahydrofolate + H(+). Functionally, attaches a formyl group to the free amino group of methionyl-tRNA(fMet). The formyl group appears to play a dual role in the initiator identity of N-formylmethionyl-tRNA by promoting its recognition by IF2 and preventing the misappropriation of this tRNA by the elongation apparatus. This chain is Methionyl-tRNA formyltransferase, found in Dinoroseobacter shibae (strain DSM 16493 / NCIMB 14021 / DFL 12).